Consider the following 1550-residue polypeptide: Protein TIME FOR COFFEE (1550 aa).

Disordered stretches follow at residues 1 to 191 (MDRN…PVSP), 207 to 304 (VPRK…PVAV), 325 to 505 (TSKQ…SERG), 708 to 736 (QGSV…TAQR), 779 to 805 (RPPN…SATP), 859 to 1023 (FNGS…KAGV), 1086 to 1130 (ASLE…QSIA), 1163 to 1196 (ALPQ…SQQP), 1213 to 1296 (AASA…SVAA), and 1321 to 1435 (NSKP…PKHG). Basic and acidic residues predominate over residues 43–80 (EAARLRDRGGSNKKDRDRERDRDRERERERDRERDRLN). The segment covering 100–118 (DGGDDSSEESVNDDEEYDD) has biased composition (acidic residues). Residues 134–151 (SNNISAASFSSSLSNHHN) show a composition bias toward low complexity. Residues 157–171 (LHHHHHSHNNNHQRK) show a composition bias toward basic residues. Residues 241 to 250 (RQISSTSPAN) are compositionally biased toward polar residues. Residues 292–301 (KSSSSKLSSP) are compositionally biased toward low complexity. Residues 348–366 (RVSSPISNPQTLPQSSITL) are compositionally biased toward polar residues. A compositionally biased stretch (low complexity) spans 367-379 (AANSSSSNVSAIA). Over residues 409–432 (SKSQVPFSNQLKSSGSGEGNSSVL) the composition is skewed to polar residues. 2 stretches are compositionally biased toward basic and acidic residues: residues 447 to 461 (DSEK…DETI) and 473 to 490 (SDGE…KFEI). Polar residues-rich tracts occupy residues 713–736 (GRSS…TAQR), 783–803 (SGIT…SASA), and 884–992 (LTGQ…NLGL). Over residues 1112-1126 (SGGGAIGKTSGGNGG) the composition is skewed to gly residues. Residues 1164-1173 (LPQSSGSLPT) show a composition bias toward polar residues. The segment covering 1174–1195 (SHHQQLLQQQQQQHMQRSQSQQ) has biased composition (low complexity). Polar residues predominate over residues 1234 to 1253 (NMTTSPAGTTKFANANSGFP). The span at 1254 to 1273 (QNLVQSSSNQVQSQQWKNNS) shows a compositional bias: low complexity. Polar residues-rich tracts occupy residues 1274 to 1296 (PRTT…SVAA), 1321 to 1342 (NSKP…NHQA), and 1351 to 1360 (SPSTSSVSKN). Low complexity predominate over residues 1361-1382 (ASGSPRTTASASSAANKGGQAS). 2 stretches are compositionally biased toward polar residues: residues 1383 to 1397 (TTTH…NLQP) and 1405 to 1419 (GGRN…NPTT). Over residues 1420–1435 (SSGSKSQQQQQLPKHG) the composition is skewed to low complexity.

Interacts with MYC2.

It is found in the nucleus. Its function is as follows. Regulator of normal clock function. Acts in the mid to late night. Contributes to the amplitude of circadian clocks. May act on the transcriptional induction of LATE ELONGATED HYPOCOTYL (LHY). Inhibits MYC2 protein accumulation, acting as a negative factor in the JA-signaling pathway. The polypeptide is Protein TIME FOR COFFEE (TIC) (Arabidopsis thaliana (Mouse-ear cress)).